The chain runs to 3420 residues: Adhesin BmaC autotransporter (3420 aa).

The first 72 residues, 1–72, serve as a signal peptide directing secretion; it reads MPNLANQDFT…SLVMAGTAAA (72 aa). The Autotransporter domain maps to 3138-3420; that stretch reads GPSGNNGIWA…AGSVGLRVRW (283 aa).

The protein localises to the cell surface. It is found in the cell outer membrane. Its function is as follows. Fibronectin-binding protein, which is involved in adhesion to host cells and in the infective process. Mediates the binding of B.suis to the extracellular matrix and to non-phagocytic cells via cell-associated fibronectin. The sequence is that of Adhesin BmaC autotransporter from Brucella suis biovar 1 (strain 1330).